We begin with the raw amino-acid sequence, 785 residues long: Disintegrin and metalloproteinase domain-containing protein B (785 aa).

The signal sequence occupies residues 1 to 26 (MRFLKSALPFVASALSLLSVQAAARS). The Extracellular portion of the chain corresponds to 27–703 (QEPSAIQHVS…GSWVEQHKNL (677 aa)). Residues 279–507 (KQVALVGIAA…NSVKSSCLSD (229 aa)) form the Peptidase M12B domain. Asn-322, Asn-329, and Asn-355 each carry an N-linked (GlcNAc...) asparagine glycan. 2 disulfides stabilise this stretch: Cys-398-Cys-492 and Cys-446-Cys-464. Position 429 (His-429) interacts with Zn(2+). Glu-430 is an active-site residue. His-433 and His-439 together coordinate Zn(2+). The 90-residue stretch at 516-605 (GSQCGNGIVE…TCPADSFKKD (90 aa)) folds into the Disintegrin domain. N-linked (GlcNAc...) asparagine glycans are attached at residues Asn-561, Asn-593, and Asn-640. Cys-577 and Cys-597 are joined by a disulfide. A helical transmembrane segment spans residues 704–724 (VIGVACGVGGLLVLSILWCMI). Residues 725-785 (NRCRRARTVV…GPYQSATRYA (61 aa)) lie on the Cytoplasmic side of the membrane. Residues 737–785 (PPMRPWPGPMPPPPPQMGQWAGPNRGYQGLRAEPPPPYPGPYQSATRYA) form a disordered region. A compositionally biased stretch (pro residues) spans 739-752 (MRPWPGPMPPPPPQ).

Zn(2+) serves as cofactor.

Its subcellular location is the membrane. Probable zinc protease. This is Disintegrin and metalloproteinase domain-containing protein B (ADM-B) from Aspergillus fumigatus (strain ATCC MYA-4609 / CBS 101355 / FGSC A1100 / Af293) (Neosartorya fumigata).